The chain runs to 409 residues: Sex-determination protein fem-3 (409 aa).

In terms of assembly, component of a complex containing fem-1, fem-2 and fem-3. Interacts with fem-1 and fem-2 (via N-terminus). Part of a E3 ubiquitin-protein ligase complex, at least composed of cul-2, elc-1, tra-1, fem-1, fem-2 and fem-3; mediates the ubiquitination and subsequent proteasomal degradation of tra-1. Interacts with sel-10. Interacts with tra-2.

Functionally, required for male development. In XO (male) animals, fem-3 directs male differentiation in all tissues. In XX (hermaphrodite animals), it specifies the first 80 or so germ cells to be sperm. Negatively regulates male development when bound to tra-2. The chain is Sex-determination protein fem-3 from Caenorhabditis briggsae.